A 378-amino-acid chain; its full sequence is Chaperone protein DnaJ (378 aa).

Residues aspartate 5–glycine 70 form the J domain. The CR-type zinc-finger motif lies at glycine 138–threonine 216. Cysteine 151, cysteine 154, cysteine 168, cysteine 171, cysteine 190, cysteine 193, cysteine 204, and cysteine 207 together coordinate Zn(2+). CXXCXGXG motif repeat units follow at residues cysteine 151–glycine 158, cysteine 168–glycine 175, cysteine 190–glycine 197, and cysteine 204–glycine 211.

The protein belongs to the DnaJ family. Homodimer. Requires Zn(2+) as cofactor.

The protein resides in the cytoplasm. Functionally, participates actively in the response to hyperosmotic and heat shock by preventing the aggregation of stress-denatured proteins and by disaggregating proteins, also in an autonomous, DnaK-independent fashion. Unfolded proteins bind initially to DnaJ; upon interaction with the DnaJ-bound protein, DnaK hydrolyzes its bound ATP, resulting in the formation of a stable complex. GrpE releases ADP from DnaK; ATP binding to DnaK triggers the release of the substrate protein, thus completing the reaction cycle. Several rounds of ATP-dependent interactions between DnaJ, DnaK and GrpE are required for fully efficient folding. Also involved, together with DnaK and GrpE, in the DNA replication of plasmids through activation of initiation proteins. The polypeptide is Chaperone protein DnaJ (Burkholderia cenocepacia (strain HI2424)).